The chain runs to 392 residues: Queuine tRNA-ribosyltransferase (392 aa).

The active-site Proton acceptor is the Asp-92. Substrate is bound by residues Asp-92–Phe-96, Asp-146, Gln-188, and Gly-215. Positions Gly-246 to Asp-252 are RNA binding. Asp-265 functions as the Nucleophile in the catalytic mechanism. Positions Thr-270–Arg-274 are RNA binding; important for wobble base 34 recognition. Zn(2+) contacts are provided by Cys-303, Cys-305, Cys-308, and His-334.

This sequence belongs to the queuine tRNA-ribosyltransferase family. In terms of assembly, homodimer. Within each dimer, one monomer is responsible for RNA recognition and catalysis, while the other monomer binds to the replacement base PreQ1. Requires Zn(2+) as cofactor.

The catalysed reaction is 7-aminomethyl-7-carbaguanine + guanosine(34) in tRNA = 7-aminomethyl-7-carbaguanosine(34) in tRNA + guanine. It participates in tRNA modification; tRNA-queuosine biosynthesis. Its function is as follows. Catalyzes the base-exchange of a guanine (G) residue with the queuine precursor 7-aminomethyl-7-deazaguanine (PreQ1) at position 34 (anticodon wobble position) in tRNAs with GU(N) anticodons (tRNA-Asp, -Asn, -His and -Tyr). Catalysis occurs through a double-displacement mechanism. The nucleophile active site attacks the C1' of nucleotide 34 to detach the guanine base from the RNA, forming a covalent enzyme-RNA intermediate. The proton acceptor active site deprotonates the incoming PreQ1, allowing a nucleophilic attack on the C1' of the ribose to form the product. After dissociation, two additional enzymatic reactions on the tRNA convert PreQ1 to queuine (Q), resulting in the hypermodified nucleoside queuosine (7-(((4,5-cis-dihydroxy-2-cyclopenten-1-yl)amino)methyl)-7-deazaguanosine). In Herpetosiphon aurantiacus (strain ATCC 23779 / DSM 785 / 114-95), this protein is Queuine tRNA-ribosyltransferase.